The chain runs to 443 residues: Mitochondrial enolase superfamily member 1 (443 aa).

Substrate contacts are provided by residues 24–26 (GSD) and Tyr-34. Ser-148 carries the phosphoserine modification. Position 220 (Lys-220) interacts with substrate. The active-site Proton donor/acceptor is the Lys-222. Asp-250 is a Mg(2+) binding site. Residues Asn-252, Glu-276, Glu-305, 355 to 357 (HAG), and Glu-386 each bind substrate. The Mg(2+) site is built by Glu-276 and Glu-305. His-355 is an active-site residue.

It belongs to the mandelate racemase/muconate lactonizing enzyme family. ENOSF1 subfamily. Mg(2+) serves as cofactor. Could be sumoylated.

It localises to the mitochondrion. The catalysed reaction is L-fuconate = 2-dehydro-3-deoxy-L-fuconate + H2O. Functionally, plays a role in the catabolism of L-fucose, a sugar that is part of the carbohydrates that are attached to cellular glycoproteins. Catalyzes the dehydration of L-fuconate to 2-keto-3-deoxy-L-fuconate by the abstraction of the 2-proton to generate an enediolate intermediate that is stabilized by the magnesium ion. May down-regulate thymidylate synthase activity, possibly already at the RNA level, by promoting the degradation of TYMS mRNA via an antisense RNA-based mechanism. This chain is Mitochondrial enolase superfamily member 1 (ENOSF1), found in Bos taurus (Bovine).